The chain runs to 450 residues: Signal recognition particle protein (450 aa).

GTP-binding positions include 106 to 113, 188 to 192, and 246 to 249; these read GLQGSGKT, DTAGR, and TKLD.

Belongs to the GTP-binding SRP family. SRP54 subfamily. In terms of assembly, part of the signal recognition particle protein translocation system, which is composed of SRP and FtsY.

The protein resides in the cytoplasm. The enzyme catalyses GTP + H2O = GDP + phosphate + H(+). Its function is as follows. Involved in targeting and insertion of nascent membrane proteins into the cytoplasmic membrane. Binds to the hydrophobic signal sequence of the ribosome-nascent chain (RNC) as it emerges from the ribosomes. The SRP-RNC complex is then targeted to the cytoplasmic membrane where it interacts with the SRP receptor FtsY. This Mycoplasma pneumoniae (strain ATCC 29342 / M129 / Subtype 1) (Mycoplasmoides pneumoniae) protein is Signal recognition particle protein.